The chain runs to 182 residues: Biotin transporter BioY2 (182 aa).

5 consecutive transmembrane segments (helical) span residues 12 to 32, 54 to 74, 78 to 98, 111 to 131, and 150 to 170; these read IALG…IGIV, FFAI…FTGG, IAVL…MGTL, IPAF…GTLW, and PFVF…LALI.

This sequence belongs to the BioY family. In terms of assembly, in E.coli forms a stable energy-coupling factor (ECF) transporter complex composed of 2 membrane-embedded substrate-binding protein (S component), 2 ATP-binding proteins (A and A' components) and 2 transmembrane proteins (T component), probably with a stoichiometry of 2:1:1:2. May be able to interact with more than 1 S component at a time.

It localises to the cell membrane. Probably a biotin-binding protein that interacts with the energy-coupling factor (ECF) ABC-transporter complex. Unlike classic ABC transporters this ECF transporter provides the energy necessary to transport a number of different substrates. The substrates themselves are bound by transmembrane, not extracytoplasmic soluble proteins. In Lactococcus lactis subsp. cremoris (strain MG1363), this protein is Biotin transporter BioY2 (bioY2).